We begin with the raw amino-acid sequence, 399 residues long: Phosphopentomutase (399 aa).

Residues Asp-10, Asp-296, His-301, Asp-337, His-338, and His-349 each coordinate Mn(2+).

Belongs to the phosphopentomutase family. Mn(2+) serves as cofactor.

It is found in the cytoplasm. It catalyses the reaction 2-deoxy-alpha-D-ribose 1-phosphate = 2-deoxy-D-ribose 5-phosphate. It carries out the reaction alpha-D-ribose 1-phosphate = D-ribose 5-phosphate. Its pathway is carbohydrate degradation; 2-deoxy-D-ribose 1-phosphate degradation; D-glyceraldehyde 3-phosphate and acetaldehyde from 2-deoxy-alpha-D-ribose 1-phosphate: step 1/2. Its function is as follows. Isomerase that catalyzes the conversion of deoxy-ribose 1-phosphate (dRib-1-P) and ribose 1-phosphate (Rib-1-P) to deoxy-ribose 5-phosphate (dRib-5-P) and ribose 5-phosphate (Rib-5-P), respectively. The polypeptide is Phosphopentomutase (Idiomarina loihiensis (strain ATCC BAA-735 / DSM 15497 / L2-TR)).